Reading from the N-terminus, the 272-residue chain is MLTYPNIDPVAIHLGPLQVHWYGLMYLLAFLCAWGLASYRTKQRDGWTSDMVSDLVFYGALGVVLGGRIGYVLFYEFDKFLENPIWLFQVWTGGMSFHGGFLGVMIAMLFWCKKYQKTWFQTLDFIAPCVPTGLMLGRIGNFIGGELYGRAVTDPNYPFGMIFPTDPLHLVRHPSQIYQALCEGLLLFIILWWFSSKPRPRMAVSALFLMGYGVARFVMEFFRQPDADQGFILFGWMTKGQILTVPMLLIGLWMMWYAYQKKIYDWGPQKNS.

7 helical membrane passes run 17–37 (LQVHWYGLMYLLAFLCAWGLA), 55–75 (LVFYGALGVVLGGRIGYVLFY), 90–110 (VWTGGMSFHGGFLGVMIAMLF), 125–145 (FIAPCVPTGLMLGRIGNFIGG), 174–194 (PSQIYQALCEGLLLFIILWWF), 202–222 (MAVSALFLMGYGVARFVMEFF), and 230–250 (GFILFGWMTKGQILTVPMLLI). An a 1,2-diacyl-sn-glycero-3-phospho-(1'-sn-glycerol)-binding site is contributed by arginine 138.

Belongs to the Lgt family.

It localises to the cell inner membrane. It carries out the reaction L-cysteinyl-[prolipoprotein] + a 1,2-diacyl-sn-glycero-3-phospho-(1'-sn-glycerol) = an S-1,2-diacyl-sn-glyceryl-L-cysteinyl-[prolipoprotein] + sn-glycerol 1-phosphate + H(+). It functions in the pathway protein modification; lipoprotein biosynthesis (diacylglyceryl transfer). Functionally, catalyzes the transfer of the diacylglyceryl group from phosphatidylglycerol to the sulfhydryl group of the N-terminal cysteine of a prolipoprotein, the first step in the formation of mature lipoproteins. The sequence is that of Phosphatidylglycerol--prolipoprotein diacylglyceryl transferase from Acinetobacter baumannii (strain SDF).